Reading from the N-terminus, the 172-residue chain is Acetolactate synthase small subunit (172 aa).

In terms of domain architecture, ACT spans 4–78 (TLSVLVEDEA…NVIKVQDITE (75 aa)).

The protein belongs to the acetolactate synthase small subunit family. As to quaternary structure, dimer of large and small chains.

The catalysed reaction is 2 pyruvate + H(+) = (2S)-2-acetolactate + CO2. It functions in the pathway amino-acid biosynthesis; L-isoleucine biosynthesis; L-isoleucine from 2-oxobutanoate: step 1/4. Its pathway is amino-acid biosynthesis; L-valine biosynthesis; L-valine from pyruvate: step 1/4. The sequence is that of Acetolactate synthase small subunit (ilvH) from Synechocystis sp. (strain ATCC 27184 / PCC 6803 / Kazusa).